Reading from the N-terminus, the 201-residue chain is Pectinesterase inhibitor 7 (201 aa).

A signal peptide spans 1-24 (MARNFELSLILFVLYLSTAAIVMA). 2 disulfides stabilise this stretch: Cys-42/Cys-51 and Cys-108/Cys-159.

Belongs to the PMEI family. As to quaternary structure, binds reversibly to PME3 to inhibit its activity; the stability of the PME3-PMEI7 complex and the inhibition of the pectin methylesterase (PME) activity is pH-dependent, based on protonation status of amino-acids at the complex interface. Accumulates in etiolated hypocotyls (at protein level).

The protein resides in the secreted. Its subcellular location is the extracellular space. It localises to the apoplast. The protein localises to the cell wall. Functionally, pectin methylesterase (PME) inhibitor that can target PME3 in a pH-dependent manner, mainly in slightly acidic conditions (pH 6.0 and 5.0) but not at pH 7.0; this processus relies on changes in the protonation of amino acids involved in intermolecular and intramolecular interactions. Regulates homogalacturonan methylesterification during plant development. This Arabidopsis thaliana (Mouse-ear cress) protein is Pectinesterase inhibitor 7.